A 570-amino-acid chain; its full sequence is Protein mom-5 (570 aa).

Residues 1–16 (MHRHILILFLFGCLSA) form the signal peptide. Residues 17–230 (DQRLSSTSIS…FDGRVRRILR (214 aa)) are Extracellular-facing. Residues 32 to 148 (STTRKCEHIT…FPVTDLCVGK (117 aa)) form the FZ domain. Disulfide bonds link Cys37/Cys98, Cys45/Cys91, Cys82/Cys119, Cys108/Cys145, and Cys112/Cys136. Asn51 is a glycosylation site (N-linked (GlcNAc...) asparagine). Asn149 carries N-linked (GlcNAc...) asparagine glycosylation. Residues 231 to 251 (IWTAAWSVACFVCSLFTLVTF) traverse the membrane as a helical segment. Residues 252–264 (LVDLSRFAYPVRP) are Cytoplasmic-facing. The chain crosses the membrane as a helical span at residues 265 to 285 (ILYLAFCYLAISTVYMIGVVG). The Extracellular portion of the chain corresponds to 286–319 (EDGFACGTYGSTPTTLVTQGGENVGCSALAVVHY). Residues 320-340 (FFFMSSCAWWLVLCLAWFLAA) traverse the membrane as a helical segment. The Cytoplasmic portion of the chain corresponds to 341–348 (NLKWGAES). The helical transmembrane segment at 349-369 (IAALSPYFHAMCWGVPAVLSV) threads the bilayer. The Extracellular segment spans residues 370–395 (TVLVTNSVDGDVFTGICSVGNLNPSA). The helical transmembrane segment at 396-416 (LVYFFFTPIVVSLALGAVLLV) threads the bilayer. Topologically, residues 417–449 (CGIWSMIRIRSYIKLQHADVERNISKLEKLMLR) are cytoplasmic. The helical transmembrane segment at 450–470 (IGAFAIMYSLPTAMNAAIMWY) threads the bilayer. The Extracellular portion of the chain corresponds to 471–515 (QAVNMPAWLEGWLHHRCVRLQDRELFGFTYPVDDCPMDPKVAAPE). Residues 516 to 536 (IIVFLLKYVSQLVVGITCAIW) traverse the membrane as a helical segment. Topologically, residues 537-570 (VVSSKTLSSYHKAYLALSSRSPTVPAHVDQVNMR) are cytoplasmic.

Belongs to the G-protein coupled receptor Fz/Smo family.

Its subcellular location is the cell membrane. It localises to the early endosome. Receptor for Wnt proteins. Most frizzled receptors are coupled to the beta-catenin canonical signaling pathway, which leads to the activation of disheveled proteins, inhibition of gsk-3 kinase, nuclear accumulation of beta-catenin and activation of Wnt target genes. A second signaling pathway involving PKC and calcium fluxes has been seen for some family members, but it is not yet clear if it represents a distinct pathway or if it can be integrated in the canonical pathway, as pkc seems to be required for Wnt-mediated inactivation of gsk-3 kinase. Both pathways seem to involve interactions with G-proteins. Required in embryonic development for the correct positioning and orientation of the mitotic spindles and division planes in blastomere cells. During early embryonic cell divisions, directs the asymmetric positioning of transcription factors such as pop-1 and dsh-2 in daughter cells in order to determine cell fate specification. Acts redundantly with other Wnt receptors such as lin-17 to control vulval precursor cell specification and also the polarity of different cell types including distal tip cells, seam cells, AVG interneurons and P-cells and their descendants. Plays a role in the migration of cell types including distal tip cells and the QR neuroblast descendants, QR.p and QR.pa during larval development. Negatively regulates the unc-6/Netrin receptors unc-5 and unc-40 to control distal tip cell polarity and migration. Acts through ced-5/DOCK180 and ced-10/Rac to control both distal tip cell migration and the phagocytic clearance of apoptotic cell corpses. Furthermore, it is also required for the migration and axon guidance of the different neuronal cell types including CAN, ALM, HSN and the two mechanosensory neurons AVM and PVM. Mediates Wnt receptor cfz-2 in directing ALM migration, but may also act redundantly with the Wnt receptors cfz-2 and mig-1 to direct the migration of other neuronal cell types including CAN and HSN. Mediates Wnt ligand egl-20 in the control of the anterior-posterior axon guidance of AVM and PVM neurons. This Caenorhabditis elegans protein is Protein mom-5.